We begin with the raw amino-acid sequence, 525 residues long: Estrogen receptor (525 aa).

The tract at residues 1-59 is disordered; that stretch reads PTSPLVFVPSSPRLSPFMHPPSHHYLETTSTPVYRSSVSSSQQQLSREDQCGTSDDSYS. Positions 1 to 82 are modulating; sequence PTSPLVFVPS…GFEMAKEMRF (82 aa). The segment covering 36–45 has biased composition (low complexity); sequence SSVSSSQQQL. 2 consecutive NR C4-type zinc fingers follow at residues 83-103 and 119-143; these read CAVC…CEGC and CPAT…LRKC. Residues 83–148 constitute a DNA-binding region (nuclear receptor); that stretch reads CAVCSDYASG…RLRKCYQVGM (66 aa). The segment at 149–209 is hinge; it reads MKGGVRKDRG…GGGKSSIIGM (61 aa). Basic and acidic residues predominate over residues 154–182; that stretch reads RKDRGRVLRRDKRRTGTSDKASKDLEHRT. Residues 154–203 are disordered; that stretch reads RKDRGRVLRRDKRRTGTSDKASKDLEHRTAPPQDRRKHSSSSSSAGGGGK. Residues 210-446 form the NR LBD domain; sequence SPDQVLLLLQ…DLLLEMLDAH (237 aa). Residues 452-465 show a composition bias toward basic and acidic residues; that stretch reads DRPAESWSQADREP. Residues 452–525 form a disordered region; that stretch reads DRPAESWSQA…GPRSDCTHIL (74 aa). Positions 479 to 493 are enriched in gly residues; the sequence is SGGGDGGPSSAGSGS.

This sequence belongs to the nuclear hormone receptor family. NR3 subfamily. In terms of assembly, binds DNA as a homodimer. Can form a heterodimer with ER-beta. Abundant in the liver, less abundant in the testes and barely detectable in the ovary and brain.

It is found in the nucleus. In terms of biological role, the steroid hormones and their receptors are involved in the regulation of eukaryotic gene expression and affect cellular proliferation and differentiation in target tissues. This is Estrogen receptor (esr1) from Micropogonias undulatus (Atlantic croaker).